The sequence spans 284 residues: Deoxyribonuclease-1 (284 aa).

A signal peptide spans 1 to 22 (MRGARLMGALLALAGLLQGALA). Residue N40 is glycosylated (N-linked (GlcNAc...) asparagine). E100 is an active-site residue. An intrachain disulfide couples C123 to C126. N-linked (GlcNAc...) asparagine glycosylation is present at N128. H156 is an active-site residue. C195 and C231 form a disulfide bridge.

The protein belongs to the DNase I family. The cofactor is Ca(2+). It depends on Mg(2+) as a cofactor. As to expression, highest expression in pancreas.

Its subcellular location is the secreted. The protein resides in the zymogen granule. It is found in the nucleus envelope. The enzyme catalyses Endonucleolytic cleavage to 5'-phosphodinucleotide and 5'-phosphooligonucleotide end-products.. Functionally, serum endocuclease secreted into body fluids by a wide variety of exocrine and endocrine organs. Expressed by non-hematopoietic tissues and preferentially cleaves protein-free DNA. Among other functions, seems to be involved in cell death by apoptosis. Binds specifically to G-actin and blocks actin polymerization. Together with DNASE1L3, plays a key role in degrading neutrophil extracellular traps (NETs). NETs are mainly composed of DNA fibers and are released by neutrophils to bind pathogens during inflammation. Degradation of intravascular NETs by DNASE1 and DNASE1L3 is required to prevent formation of clots that obstruct blood vessels and cause organ damage following inflammation. In Canis lupus familiaris (Dog), this protein is Deoxyribonuclease-1 (DNASE1).